Reading from the N-terminus, the 156-residue chain is Large ribosomal subunit protein uL22 (156 aa).

This sequence belongs to the universal ribosomal protein uL22 family. Part of the 50S ribosomal subunit.

Functionally, this protein binds specifically to 23S rRNA. It makes multiple contacts with different domains of the 23S rRNA in the assembled 50S subunit and ribosome. Its function is as follows. The globular domain of the protein is located near the polypeptide exit tunnel on the outside of the subunit, while an extended beta-hairpin is found that lines the wall of the exit tunnel in the center of the 70S ribosome. The sequence is that of Large ribosomal subunit protein uL22 from Halobacterium salinarum (strain ATCC 700922 / JCM 11081 / NRC-1) (Halobacterium halobium).